The following is a 404-amino-acid chain: Deoxyguanosinetriphosphate triphosphohydrolase-like protein (404 aa).

Residues 69–217 form the HD domain; sequence RLTHSLEVAQ…AGIADDIAYD (149 aa).

The protein belongs to the dGTPase family. Type 2 subfamily.

This is Deoxyguanosinetriphosphate triphosphohydrolase-like protein from Rhodopseudomonas palustris (strain BisB18).